A 92-amino-acid polypeptide reads, in one-letter code: DNA-binding protein HU (92 aa).

The protein belongs to the bacterial histone-like protein family. As to quaternary structure, homodimer.

Histone-like DNA-binding protein which is capable of wrapping DNA to stabilize it, and thus to prevent its denaturation under extreme environmental conditions. In Buchnera aphidicola subsp. Acyrthosiphon pisum (strain APS) (Acyrthosiphon pisum symbiotic bacterium), this protein is DNA-binding protein HU (hup).